Here is a 696-residue protein sequence, read N- to C-terminus: UvrABC system protein B (696 aa).

Residues 45 to 434 (EGIGDGLSYQ…DEVVEQVVRP (390 aa)) form the Helicase ATP-binding domain. 58–65 (GVTGSGKT) serves as a coordination point for ATP. The short motif at 111–134 (YYDYYQPEAYVPQRDLFIEKDSSV) is the Beta-hairpin element. The Helicase C-terminal domain maps to 450-616 (QVDDLLSEIH…GVVKRIKDII (167 aa)). The 36-residue stretch at 647-682 (GKEIKRLEKQMLDHAKNLEFEKAAAVRDQLAKLKSQ) folds into the UVR domain.

This sequence belongs to the UvrB family. In terms of assembly, forms a heterotetramer with UvrA during the search for lesions. Interacts with UvrC in an incision complex.

The protein resides in the cytoplasm. Its function is as follows. The UvrABC repair system catalyzes the recognition and processing of DNA lesions. A damage recognition complex composed of 2 UvrA and 2 UvrB subunits scans DNA for abnormalities. Upon binding of the UvrA(2)B(2) complex to a putative damaged site, the DNA wraps around one UvrB monomer. DNA wrap is dependent on ATP binding by UvrB and probably causes local melting of the DNA helix, facilitating insertion of UvrB beta-hairpin between the DNA strands. Then UvrB probes one DNA strand for the presence of a lesion. If a lesion is found the UvrA subunits dissociate and the UvrB-DNA preincision complex is formed. This complex is subsequently bound by UvrC and the second UvrB is released. If no lesion is found, the DNA wraps around the other UvrB subunit that will check the other stand for damage. This is UvrABC system protein B from Ralstonia nicotianae (strain ATCC BAA-1114 / GMI1000) (Ralstonia solanacearum).